A 515-amino-acid polypeptide reads, in one-letter code: SWI/SNF global transcription activator complex subunit snf59 (515 aa).

Residues 1 to 226 (MEEEDITLEH…IHHVDSKNEE (226 aa)) are disordered. 5 stretches are compositionally biased toward basic and acidic residues: residues 7 to 37 (TLEH…DNSN), 50 to 59 (EEPKYHDNSN), 73 to 85 (EPEH…KEST), 94 to 103 (EEPKHHDNSN), and 116 to 125 (EEPKHHDSSN). The segment covering 126–136 (KESTNLDNSNM) has biased composition (polar residues). Basic and acidic residues predominate over residues 140–226 (ENQKNFKIEE…IHHVDSKNEE (87 aa)).

Belongs to the RSC7/SWP82 family. SWP82 subfamily. Component of the SWI/SNF global transcription activator complex composed of at least arp9, arp42, snf5, snf22, snf30, snf59, sol1, ssr1, ssr2, ssr3, ssr4 and tfg3.

The protein localises to the nucleus. Component of the SWI/SNF complex, an ATP-dependent chromatin remodeling complex, which is required for the positive and negative regulation of gene expression of a large number of genes. It changes chromatin structure by altering DNA-histone contacts within a nucleosome, leading eventually to a change in nucleosome position, thus facilitating or repressing binding of gene-specific transcription factors. The chain is SWI/SNF global transcription activator complex subunit snf59 (snf59) from Schizosaccharomyces pombe (strain 972 / ATCC 24843) (Fission yeast).